The following is a 210-amino-acid chain: MSVSDLRQSYERGVLLEQQAAATPIDQFALWFDEAQAAQVPEPNAMTLATVDASGQPSARIVLIKAFDARGFTFFTNYTSRKGEDLLANPRAALLFFWQALERQVRIEGVVERVSADESDAYFHSRPVGSRIGAWASEQSQPITREALEARERDFKARFGDTPPRPPHWGGYRLVPTYFEFWQGRPSRLHDRLRYRPDGKQGWVMDRLSP.

Residues 7–10 and K65 contribute to the substrate site; that span reads RQSY. FMN is bound by residues 60-65, 75-76, R81, K82, and Q104; these read RIVLIK and FT. Positions 122, 126, and 130 each coordinate substrate. Residues 139–140 and W182 each bind FMN; that span reads QS. 188-190 is a binding site for substrate; the sequence is RLH. R192 lines the FMN pocket.

It belongs to the pyridoxamine 5'-phosphate oxidase family. Homodimer. Requires FMN as cofactor.

It carries out the reaction pyridoxamine 5'-phosphate + O2 + H2O = pyridoxal 5'-phosphate + H2O2 + NH4(+). The enzyme catalyses pyridoxine 5'-phosphate + O2 = pyridoxal 5'-phosphate + H2O2. The protein operates within cofactor metabolism; pyridoxal 5'-phosphate salvage; pyridoxal 5'-phosphate from pyridoxamine 5'-phosphate: step 1/1. It functions in the pathway cofactor metabolism; pyridoxal 5'-phosphate salvage; pyridoxal 5'-phosphate from pyridoxine 5'-phosphate: step 1/1. Catalyzes the oxidation of either pyridoxine 5'-phosphate (PNP) or pyridoxamine 5'-phosphate (PMP) into pyridoxal 5'-phosphate (PLP). This chain is Pyridoxine/pyridoxamine 5'-phosphate oxidase, found in Bordetella avium (strain 197N).